We begin with the raw amino-acid sequence, 348 residues long: Heptaprenyl diphosphate synthase component 2 (348 aa).

Isopentenyl diphosphate is bound by residues Lys-73, Arg-76, and His-105. Mg(2+) contacts are provided by Asp-112 and Asp-116. Residue Arg-121 coordinates all-trans-hexaprenyl diphosphate. Arg-122 is a binding site for isopentenyl diphosphate. Lys-198, Thr-199, and Gln-236 together coordinate all-trans-hexaprenyl diphosphate.

It belongs to the FPP/GGPP synthase family. Heterodimer of component I and II. Requires Mg(2+) as cofactor.

It catalyses the reaction 4 isopentenyl diphosphate + (2E,6E)-farnesyl diphosphate = all-trans-heptaprenyl diphosphate + 4 diphosphate. Supplies heptaprenyl diphosphate, the precursor for the side chain of the isoprenoid quinone menaquinone-7 (MQ-7). This is Heptaprenyl diphosphate synthase component 2 (hepT) from Bacillus subtilis (strain 168).